A 513-amino-acid chain; its full sequence is Activin receptor type-2A (513 aa).

An N-terminal signal peptide occupies residues 1–19 (MGAAAKLAFAVFLISCSSG). Residues 20–135 (AILGRSETQE…TSNPVTPKPP (116 aa)) are Extracellular-facing. 5 disulfides stabilise this stretch: cysteine 30/cysteine 60, cysteine 50/cysteine 78, cysteine 85/cysteine 104, cysteine 91/cysteine 103, and cysteine 105/cysteine 110. N-linked (GlcNAc...) asparagine glycosylation is found at asparagine 43 and asparagine 66. The helical transmembrane segment at 136 to 161 (YYNILLYSLVPLMLIAGIVICAFWVY) threads the bilayer. Topologically, residues 162-513 (RHHMMAYPPV…VDFPPKESSL (352 aa)) are cytoplasmic. The region spanning 192-485 (LQLLEVKARG…GERITQMQRL (294 aa)) is the Protein kinase domain. ATP is bound by residues 198-206 (KARGRFGCV) and lysine 219. Aspartate 322 (proton acceptor) is an active-site residue.

This sequence belongs to the protein kinase superfamily. TKL Ser/Thr protein kinase family. TGFB receptor subfamily. In terms of assembly, part of a complex consisting of MAGI2/ARIP1, ACVR2A, ACVR1B and SMAD3. Interacts with MAGI2/ARIP1. Interacts with type I receptor ACVR1. Interacts with BMP7. Interacts with TSC22D1/TSC-22. Interacts with activin A/INHBA. Requires Mg(2+) as cofactor. Mn(2+) is required as a cofactor.

It localises to the cell membrane. The enzyme catalyses L-threonyl-[receptor-protein] + ATP = O-phospho-L-threonyl-[receptor-protein] + ADP + H(+). It catalyses the reaction L-seryl-[receptor-protein] + ATP = O-phospho-L-seryl-[receptor-protein] + ADP + H(+). On ligand binding, forms a receptor complex consisting of two type II and two type I transmembrane serine/threonine kinases. Type II receptors phosphorylate and activate type I receptors which autophosphorylate, then bind and activate SMAD transcriptional regulators. Receptor for activin A, activin B and inhibin A. Mediates induction of adipogenesis by GDF6. This is Activin receptor type-2A from Rattus norvegicus (Rat).